Consider the following 386-residue polypeptide: Succinate--CoA ligase [ADP-forming] subunit beta (386 aa).

Residues 9–237 enclose the ATP-grasp domain; the sequence is KEVLRDFGVN…LSAEHPLEVE (229 aa). ATP contacts are provided by residues Lys45, 52-54, Val94, and Glu101; that span reads GRG. Mg(2+) contacts are provided by Asn192 and Asp206. Residues Asn258 and 315–317 contribute to the substrate site; that span reads GIT.

It belongs to the succinate/malate CoA ligase beta subunit family. In terms of assembly, heterotetramer of two alpha and two beta subunits. Mg(2+) is required as a cofactor.

It carries out the reaction succinate + ATP + CoA = succinyl-CoA + ADP + phosphate. It catalyses the reaction GTP + succinate + CoA = succinyl-CoA + GDP + phosphate. It participates in carbohydrate metabolism; tricarboxylic acid cycle; succinate from succinyl-CoA (ligase route): step 1/1. Functionally, succinyl-CoA synthetase functions in the citric acid cycle (TCA), coupling the hydrolysis of succinyl-CoA to the synthesis of either ATP or GTP and thus represents the only step of substrate-level phosphorylation in the TCA. The beta subunit provides nucleotide specificity of the enzyme and binds the substrate succinate, while the binding sites for coenzyme A and phosphate are found in the alpha subunit. This chain is Succinate--CoA ligase [ADP-forming] subunit beta, found in Deinococcus radiodurans (strain ATCC 13939 / DSM 20539 / JCM 16871 / CCUG 27074 / LMG 4051 / NBRC 15346 / NCIMB 9279 / VKM B-1422 / R1).